A 446-amino-acid polypeptide reads, in one-letter code: Alkylglycerol monooxygenase (446 aa).

The next 2 membrane-spanning stretches (helical) occupy residues 43–63 (ATVY…AWKG) and 110–130 (WDSP…YYWF). The region spanning 118 to 248 (LTFLGVDFGY…LIIWDRMFGT (131 aa)) is the Fatty acid hydroxylase domain. Residues 131 to 135 (HRMAH) carry the Histidine box-1 motif. Positions 144–148 (HQTHH) match the Histidine box-2 motif. Residues 167–187 (YFSWMFYWPMAFCIPPSVFAV) traverse the membrane as a helical segment. Positions 220-224 (HRVHH) match the Histidine box-3 motif. A run of 3 helical transmembrane segments spans residues 339 to 359 (MMHF…KLIL), 362 to 382 (ATLL…GFIF), and 412 to 434 (VPYL…GLKA).

The protein belongs to the sterol desaturase family. TMEM195 subfamily. Requires Fe cation as cofactor.

Its subcellular location is the endoplasmic reticulum membrane. It carries out the reaction 1-O-(1,2-saturated-alkyl)-sn-glycerol + (6R)-L-erythro-5,6,7,8-tetrahydrobiopterin + O2 = a 1-(1-hydroxyalkyl)-sn-glycerol + (6R)-L-erythro-6,7-dihydrobiopterin + H2O. Glyceryl-ether monooxygenase that cleaves the O-alkyl bond of ether lipids. Ether lipids are essential components of brain membranes. This Xenopus tropicalis (Western clawed frog) protein is Alkylglycerol monooxygenase (agmo).